Here is a 150-residue protein sequence, read N- to C-terminus: Transthyretin (150 aa).

Residues 1 to 20 (MGSSSLLLVCLAGMVYLTEA) form the signal peptide. A Sulfocysteine modification is found at Cys-33. L-thyroxine contacts are provided by Lys-38, Glu-77, and Ser-140.

This sequence belongs to the transthyretin family. Homotetramer. Dimer of dimers. In the homotetramer, subunits assemble around a central channel that can accommodate two ligand molecules. Interacts with RBP4. In terms of processing, sulfonation of the reactive cysteine Cys-33 enhances the stability of the native conformation of TTR, avoiding misassembly of the protein leading to amyloid formation. As to expression, detected in choroid plexus (at protein level). Detected in choroid plexus.

Its subcellular location is the secreted. Thyroid hormone-binding protein. Probably transports thyroxine from the bloodstream to the brain. The sequence is that of Transthyretin (TTR) from Tiliqua rugosa (Shingleback lizard).